Consider the following 844-residue polypeptide: Translation elongation factor 2 (844 aa).

Residues 17-348 enclose the tr-type G domain; that stretch reads RNIRNMSVIA…MIAIHLPSPV (332 aa). Residue 26–33 participates in GTP binding; the sequence is AHVDHGKS. Thr-57 and Thr-59 each carry phosphothreonine. Residues 162 to 165 and 219 to 221 each bind GTP; these read NKMD and SGL. Ser-488 carries the phosphoserine modification. Residue His-701 is modified to Diphthamide.

This sequence belongs to the TRAFAC class translation factor GTPase superfamily. Classic translation factor GTPase family. EF-G/EF-2 subfamily. Post-translationally, phosphorylation by EF-2 kinase completely inactivates EF-2.

The protein localises to the cytoplasm. The enzyme catalyses GTP + H2O = GDP + phosphate + H(+). Its function is as follows. Catalyzes the GTP-dependent ribosomal translocation step during translation elongation. During this step, the ribosome changes from the pre-translocational (PRE) to the post-translocational (POST) state as the newly formed A-site-bound peptidyl-tRNA and P-site-bound deacylated tRNA move to the P and E sites, respectively. Catalyzes the coordinated movement of the two tRNA molecules, the mRNA and conformational changes in the ribosome. In Bombyx mori (Silk moth), this protein is Translation elongation factor 2.